A 69-amino-acid polypeptide reads, in one-letter code: UPF0435 protein SH1076 (69 aa).

It belongs to the UPF0435 family.

In Staphylococcus haemolyticus (strain JCSC1435), this protein is UPF0435 protein SH1076.